We begin with the raw amino-acid sequence, 347 residues long: MQIQLGANLKPYHTFGIEQLAAQLVVAESIDDLKALYCSAEWASLPKLIIGKGSNMLFTCHYTGMIVVNRLNGIEHQQDDDYHRLHVAGGEDWPSLVSWCVEQGIGGLENLALIPGCAGSAPIQNIGAYGVEFKDVCDYVEYLCLETGTVKRLTMEECQFGYRDSIFKHQLYQKAVVTAVGLKFAKAWQPIIQYGPLKDLSSDCAIHDVYQRVCATRMEKLPDPAVMGNAGSFFKNPVISQQAFARLQIEHPDVVAYPAEQGVKVAAGWLIDQAGLKGHQIGGAKVHPKQALVIVNTGDASAQDVLMLAADIQQRVFNCYGIELEHEVRFIGESEETNLKQWMSEQA.

The 171-residue stretch at 17 to 187 (IEQLAAQLVV…TAVGLKFAKA (171 aa)) folds into the FAD-binding PCMH-type domain. Residue R163 is part of the active site. The Proton donor role is filled by S232. E327 is a catalytic residue.

This sequence belongs to the MurB family. FAD is required as a cofactor.

Its subcellular location is the cytoplasm. It catalyses the reaction UDP-N-acetyl-alpha-D-muramate + NADP(+) = UDP-N-acetyl-3-O-(1-carboxyvinyl)-alpha-D-glucosamine + NADPH + H(+). It participates in cell wall biogenesis; peptidoglycan biosynthesis. Functionally, cell wall formation. This is UDP-N-acetylenolpyruvoylglucosamine reductase from Vibrio cholerae serotype O1 (strain ATCC 39315 / El Tor Inaba N16961).